Here is a 219-residue protein sequence, read N- to C-terminus: MPRGRKSRRRRNARAAEENRNNRKIQASEASETPMAASVVASTPEDDLSGPEEDPSTPEEASTTPEEASSTAQAQKPSVPRSNFQGTKKSLLMSILALIFIMGNSAKEALVWKVLGKLGMQPGRQHSIFGDPKKIVTEEFVRRGYLIYKPVPRSSPVEYEFFWGPRAHVESSKLKVMHFVARVRNRCSKDWPCNYDWDSDDDAEVEAILNSGARGYSAP.

Positions 1–13 (MPRGRKSRRRRNA) are enriched in basic residues. The interval 1–84 (MPRGRKSRRR…QKPSVPRSNF (84 aa)) is disordered. An MAGE domain is found at 1-198 (MPRGRKSRRR…KDWPCNYDWD (198 aa)). Positions 44–57 (PEDDLSGPEEDPST) are enriched in acidic residues. Low complexity predominate over residues 58–74 (PEEASTTPEEASSTAQA). At tyrosine 195 the chain carries Phosphotyrosine.

This chain is Melanoma-associated antigen H1 (MAGEH1), found in Homo sapiens (Human).